Consider the following 944-residue polypeptide: Protein translocase subunit SecA (944 aa).

Residues Q96, 114–118 (GEGKT), and D554 each bind ATP.

This sequence belongs to the SecA family. As to quaternary structure, monomer and homodimer. Part of the essential Sec protein translocation apparatus which comprises SecA, SecYEG and auxiliary proteins SecDF. Other proteins may also be involved.

It is found in the cell inner membrane. The protein resides in the cytoplasm. The enzyme catalyses ATP + H2O + cellular proteinSide 1 = ADP + phosphate + cellular proteinSide 2.. Part of the Sec protein translocase complex. Interacts with the SecYEG preprotein conducting channel. Has a central role in coupling the hydrolysis of ATP to the transfer of proteins into and across the cell membrane, serving as an ATP-driven molecular motor driving the stepwise translocation of polypeptide chains across the membrane. In Hydrogenobaculum sp. (strain Y04AAS1), this protein is Protein translocase subunit SecA.